The sequence spans 209 residues: MSGKKRTASSSRWMQEHFDDHYVKLAQKRGLRSRAAFKIEEIQEKDKLIRPGMTVVDLGAAPGGWSQVAVKLAGDKGKVIACDILPMDPIVGVDFLQGDFREEKVLDALLTRVGDAKVDVVLSDMAPNMSGTGGVDQPRAMYLVELALDMCHQVLAPNGCFAVKVFQGEGFDEYMKAVKEAFKTVKTRKPDSSRPRSREVYLVATGYKL.

S-adenosyl-L-methionine is bound by residues glycine 63, tryptophan 65, aspartate 83, aspartate 99, and aspartate 124. The Proton acceptor role is filled by lysine 164.

It belongs to the class I-like SAM-binding methyltransferase superfamily. RNA methyltransferase RlmE family.

The protein resides in the cytoplasm. The catalysed reaction is uridine(2552) in 23S rRNA + S-adenosyl-L-methionine = 2'-O-methyluridine(2552) in 23S rRNA + S-adenosyl-L-homocysteine + H(+). Functionally, specifically methylates the uridine in position 2552 of 23S rRNA at the 2'-O position of the ribose in the fully assembled 50S ribosomal subunit. This Shewanella halifaxensis (strain HAW-EB4) protein is Ribosomal RNA large subunit methyltransferase E.